The following is a 101-amino-acid chain: A-type ATP synthase subunit K (101 aa).

3 helical membrane passes run 4 to 24 (ALLI…AAQA), 32 to 52 (FMGI…GAGV), and 75 to 95 (VLIF…FAVL).

It belongs to the V-ATPase proteolipid subunit family. As to quaternary structure, has multiple subunits with at least A(3), B(3), C, D, E, F, H, I and proteolipid K(x).

The protein resides in the cell membrane. Functionally, component of the A-type ATP synthase that produces ATP from ADP in the presence of a proton gradient across the membrane. This is A-type ATP synthase subunit K from Sulfolobus acidocaldarius (strain ATCC 33909 / DSM 639 / JCM 8929 / NBRC 15157 / NCIMB 11770).